The primary structure comprises 519 residues: Ribonuclease Y (519 aa).

Residues 3–23 (LIEIVLLLVGMAVGAATGFIL) form a helical membrane-spanning segment. Residues 209 to 272 (TVTAVSLPSE…QIAKMALERL (64 aa)) enclose the KH domain. One can recognise an HD domain in the interval 335-428 (VLQHSMEVAS…VQAADSLSGA (94 aa)).

It belongs to the RNase Y family.

It is found in the cell membrane. Functionally, endoribonuclease that initiates mRNA decay. This Oleidesulfovibrio alaskensis (strain ATCC BAA-1058 / DSM 17464 / G20) (Desulfovibrio alaskensis) protein is Ribonuclease Y.